The primary structure comprises 337 residues: MVAPSRLPSHEEQSAAAAADGSATPSQGIPVVDLGVLINGAADERSRAIRDLGRACEDWGFFMVTNHGVPEALREAIMDACKELFRLPLEEKKEYMRAKPMDPIRIGTGFYSVVDAVPCRRDYLKMFSHPEFHCPEKPAKLREIATEYATCTRALLLELTKAISESLGLAGGRLSEALNLESCFQILVGNHYPACSRPDEQAMGLSAHSDHGLLTLLFQNGVDGLQVKHDGEWLLAKPLPGSFFVIAGDQLEIVTNGRYKGVLHRAVVGGEQSRMSFVSLIGPCMDTVVEPLPEMAADGRGLEFRGIRYRDYMEMQQSNSINEKTALDIVRVMHQAG.

The disordered stretch occupies residues Met-1–Pro-25. The region spanning Asn-179–Pro-283 is the Fe2OG dioxygenase domain. Fe cation contacts are provided by His-208, Asp-210, and His-264. Arg-274 is a binding site for 2-oxoglutarate.

The protein belongs to the iron/ascorbate-dependent oxidoreductase family. Fe(2+) is required as a cofactor. L-ascorbate serves as cofactor. Expressed in shoots.

It is found in the cytoplasm. It carries out the reaction melatonin + 2-oxoglutarate + O2 = 2-hydroxymelatonin + succinate + CO2. Functionally, involved in melatonin degradation. Catalyzes the hydroxylation of melatonin to produce 2-hydroxymelatonin. The sequence is that of 2-oxoglutarate-dependent dioxygenase 19 from Oryza sativa subsp. japonica (Rice).